The primary structure comprises 245 residues: 8-amino-3,8-dideoxy-manno-octulosonate cytidylyltransferase (245 aa).

It belongs to the KdsB family.

The protein resides in the cytoplasm. The catalysed reaction is 8-amino-3,8-dideoxy-alpha-D-manno-octulosonate + CTP = CMP-8-amino-3,8-dideoxy-alpha-D-manno-oct-2-ulosonate + diphosphate. The protein operates within bacterial outer membrane biogenesis; lipopolysaccharide biosynthesis. Activates KDO8N (a required 8-carbon sugar) for incorporation into bacterial lipopolysaccharide in the Shewanella genus. This chain is 8-amino-3,8-dideoxy-manno-octulosonate cytidylyltransferase, found in Shewanella piezotolerans (strain WP3 / JCM 13877).